The chain runs to 176 residues: Glutathione-regulated potassium-efflux system ancillary protein KefF (176 aa).

FMN contacts are provided by residues H8, S14 to N17, M65 to Y68, and T105 to G108.

The protein belongs to the NAD(P)H dehydrogenase (quinone) family. KefF subfamily. Homodimer. Interacts with KefC. FMN is required as a cofactor.

It is found in the cell inner membrane. The catalysed reaction is a quinone + NADH + H(+) = a quinol + NAD(+). It catalyses the reaction a quinone + NADPH + H(+) = a quinol + NADP(+). Regulatory subunit of a potassium efflux system that confers protection against electrophiles. Required for full activity of KefC. Shows redox enzymatic activity, but this enzymatic activity is not required for activation of KefC. The sequence is that of Glutathione-regulated potassium-efflux system ancillary protein KefF from Salmonella gallinarum (strain 287/91 / NCTC 13346).